A 258-amino-acid chain; its full sequence is Uridylate cyclase (258 aa).

One can recognise a Guanylate cyclase domain in the interval 50-190 (AAIFIDLRGS…DVVNKASKMC (141 aa)). An a ribonucleoside 5'-triphosphate-binding site is contributed by phenylalanine 53. Mn(2+) contacts are provided by aspartate 55 and aspartate 102.

It belongs to the adenylyl cyclase class-4/guanylyl cyclase family. Pyrimidine cyclase subfamily. In terms of assembly, homodimer. The cofactor is Mn(2+).

Its subcellular location is the cytoplasm. The catalysed reaction is UTP = 3',5'-cyclic UMP + diphosphate. In terms of biological role, pycsar (pyrimidine cyclase system for antiphage resistance) provides immunity against bacteriophage. The pyrimidine cyclase (PycC) synthesizes cyclic nucleotides in response to infection; these serve as specific second messenger signals. The signals activate the adjacent effector, leading to bacterial cell death and abortive phage infection. A clade C Pycsar system. Functionally, the pyrimidine cyclase gene of a two-gene Pycsar system, weakly generates cyclic UMP (cUMP) from UTP, has little to no activity on ATP, CTP or GTP. Expression of this and adjacent effector GmPycTM (AC P0DV43) probably confers resistance to bacteriophage. The genes are probably only expressed in response to bacteriophage infection. This Gulbenkiania mobilis protein is Uridylate cyclase.